An 842-amino-acid polypeptide reads, in one-letter code: Elongation factor 2 (842 aa).

The tr-type G domain occupies 17–253 (TNVRNMSVIA…LWGDSYFNPK (237 aa)). GTP is bound by residues 26–33 (AHVDHGKS), 158–161 (NKVD), and 213–215 (SGL). H699 carries the diphthamide modification.

Belongs to the TRAFAC class translation factor GTPase superfamily. Classic translation factor GTPase family. EF-G/EF-2 subfamily.

Its subcellular location is the cytoplasm. It carries out the reaction GTP + H2O = GDP + phosphate + H(+). In terms of biological role, catalyzes the GTP-dependent ribosomal translocation step during translation elongation. During this step, the ribosome changes from the pre-translocational (PRE) to the post-translocational (POST) state as the newly formed A-site-bound peptidyl-tRNA and P-site-bound deacylated tRNA move to the P and E sites, respectively. Catalyzes the coordinated movement of the two tRNA molecules, the mRNA and conformational changes in the ribosome. The chain is Elongation factor 2 (EFT1) from Eremothecium gossypii (strain ATCC 10895 / CBS 109.51 / FGSC 9923 / NRRL Y-1056) (Yeast).